We begin with the raw amino-acid sequence, 420 residues long: 3-isopropylmalate dehydratase large subunit (420 aa).

The [4Fe-4S] cluster site is built by Cys301, Cys361, and Cys364.

Belongs to the aconitase/IPM isomerase family. LeuC type 2 subfamily. In terms of assembly, heterodimer of LeuC and LeuD. Requires [4Fe-4S] cluster as cofactor.

The enzyme catalyses (2R,3S)-3-isopropylmalate = (2S)-2-isopropylmalate. It functions in the pathway amino-acid biosynthesis; L-leucine biosynthesis; L-leucine from 3-methyl-2-oxobutanoate: step 2/4. In terms of biological role, catalyzes the isomerization between 2-isopropylmalate and 3-isopropylmalate, via the formation of 2-isopropylmaleate. In Desulfovibrio desulfuricans (strain ATCC 27774 / DSM 6949 / MB), this protein is 3-isopropylmalate dehydratase large subunit.